The sequence spans 44 residues: MRNLKTYLSVAPVLSTLWFGSLAGLLIEINRFFPDALTFPFFSF.

The chain crosses the membrane as a helical span at residues 7 to 27; sequence YLSVAPVLSTLWFGSLAGLLI.

It belongs to the PsaJ family.

The protein resides in the plastid. It localises to the chloroplast thylakoid membrane. Functionally, may help in the organization of the PsaE and PsaF subunits. This chain is Photosystem I reaction center subunit IX, found in Fagopyrum esculentum subsp. ancestrale (Wild buckwheat).